A 363-amino-acid polypeptide reads, in one-letter code: 1,2-Dihydrovomilenine reductase (363 aa).

The Enoyl reductase (ER) domain occupies Gly24–Ile352. Position 51 (Cys51) interacts with Zn(2+). Ser53 lines the NADP(+) pocket. The Zn(2+) site is built by Asp54, Glu74, Cys104, Cys107, Cys110, and Cys118. Residues Leu193, Gly195, Leu196, Ser215, Thr216, Ser217, Lys220, Lys221, Val278, Ala280, Thr302, and Arg349 each coordinate NADP(+).

Belongs to the zinc-containing alcohol dehydrogenase family. Class-P subfamily. In terms of assembly, homodimer. It depends on Zn(2+) as a cofactor. In terms of tissue distribution, mainly expressed in mature roots and, to a lower extent, in stems and leaves.

Its subcellular location is the cytoplasm. It carries out the reaction 17-O-acetylnorajmaline + NADP(+) = (2R)-1,2-dihydrovomilenine + NADPH + 2 H(+). The enzyme catalyses (20S)-19,20-dihydrovomilenine + NADP(+) = vomilenine + NADPH + H(+). Its pathway is alkaloid biosynthesis; ajmaline biosynthesis. Alcohol dehydrogenase involved in the biosynthesis of ajmaline-type monoterpenoid indole alkaloids (MIAs) natural products, important plant-derived pharmaceuticals used in the therapy of heart disorders. Catalyzes the conversion of 1,2-dihydrovomilenine to 17-O-acetylnorajmaline, an intermediate chemical in the biosynthesis of ajmaline. Also able, with a lower efficiency, to convert vomilenine into 19,20-dihydrovomilenine. The chain is 1,2-Dihydrovomilenine reductase from Rauvolfia serpentina (Serpentine wood).